A 302-amino-acid chain; its full sequence is Putative fructose-bisphosphate aldolase (302 aa).

Asp-86 (proton donor) is an active-site residue. Zn(2+) contacts are provided by His-87, Asp-116, Glu-146, and His-192. Residue Gly-193 participates in dihydroxyacetone phosphate binding. A Zn(2+)-binding site is contributed by His-223. Residues 224–226 (GAD) and 245–248 (NVNR) each bind dihydroxyacetone phosphate.

This sequence belongs to the class II fructose-bisphosphate aldolase family. In terms of assembly, homodimer. It depends on Zn(2+) as a cofactor.

It catalyses the reaction beta-D-fructose 1,6-bisphosphate = D-glyceraldehyde 3-phosphate + dihydroxyacetone phosphate. It functions in the pathway carbohydrate degradation; glycolysis; D-glyceraldehyde 3-phosphate and glycerone phosphate from D-glucose: step 4/4. In terms of biological role, catalyzes the aldol condensation of dihydroxyacetone phosphate (DHAP or glycerone-phosphate) with glyceraldehyde 3-phosphate (G3P) to form fructose 1,6-bisphosphate (FBP) in gluconeogenesis and the reverse reaction in glycolysis. This is Putative fructose-bisphosphate aldolase from Coccidioides immitis (strain RS) (Valley fever fungus).